We begin with the raw amino-acid sequence, 760 residues long: Prolyl endopeptidase FAP (760 aa).

Over 1–4 the chain is Cytoplasmic; the sequence is MKTW. The chain crosses the membrane as a helical; Signal-anchor for type II membrane protein span at residues 5 to 25; sequence LKIVFGVATSAVLALLVMCIV. The Extracellular segment spans residues 26–760; the sequence is LRPSRVHNSE…FLKQCFSLSD (735 aa). Asn-49, Asn-92, and Asn-99 each carry an N-linked (GlcNAc...) asparagine glycan. Substrate-binding residues include Glu-203 and Glu-204. Asn-227 and Asn-314 each carry an N-linked (GlcNAc...) asparagine glycan. Disulfide bonds link Cys-321/Cys-332, Cys-438/Cys-441, and Cys-448/Cys-466. Residues 481 to 512 are a coiled coil; that stretch reads TDQEIKILEDNKELENALKNIQLPKEEIKKLK. Catalysis depends on Ser-624, which acts as the Charge relay system. A disulfide bridge links Cys-643 with Cys-755. Asn-679 carries N-linked (GlcNAc...) asparagine glycosylation. Catalysis depends on charge relay system residues Asp-702 and His-734.

It belongs to the peptidase S9B family. Homodimer; homodimerization is required for activity of both plasma membrane and soluble forms. The monomer is inactive. Heterodimer with DPP4. Interacts with PLAUR; the interaction occurs at the cell surface of invadopodia membranes. Interacts with ITGB1. Interacts with ITGA3. Associates with integrin alpha-3/beta-1; the association occurs in a collagen-dependent manner at the cell surface of invadopodia membranes. Post-translationally, N-glycosylated. In terms of processing, the N-terminus may be blocked.

The protein localises to the cell surface. It is found in the cell membrane. It localises to the cell projection. The protein resides in the lamellipodium membrane. Its subcellular location is the invadopodium membrane. The protein localises to the ruffle membrane. It is found in the membrane. It localises to the secreted. The catalysed reaction is Release of an N-terminal dipeptide, Xaa-Yaa-|-Zaa-, from a polypeptide, preferentially when Yaa is Pro, provided Zaa is neither Pro nor hydroxyproline.. The enzyme catalyses Hydrolysis of Pro-|-Xaa &gt;&gt; Ala-|-Xaa in oligopeptides.. Its activity is regulated as follows. Gelatinase activity is inhibited by serine-protease inhibitors, such as phenylmethylsulfonyl fluoride (PMSF), 4-(2-aminoethyl)-benzenesulfonyl fluoride hydrochloride (AEBSF), 4-amidino phenylsulfonyl fluoride (APSF) and diisopropyl fluorophosphate (DFP), N-ethylmaleimide (NEM) and phenylmethylsulfonyl fluoride (PMSF). Dipeptidyl peptidase activity is inhibited by 2,2'-azino-bis(3-ethylbenzthiazoline-6-sulfonic acid), diisopropylfluorophosphate (DFP). Prolyl endopeptidase activity is inhibited by the boronic acid peptide Ac-Gly-BoroPro, Ac-Gly-Pro-chloromethyl ketone and Thr-Ser-Gly-chloromethyl ketone. Cell surface glycoprotein serine protease that participates in extracellular matrix degradation and involved in many cellular processes including tissue remodeling, fibrosis, wound healing, inflammation and tumor growth. Both plasma membrane and soluble forms exhibit post-proline cleaving endopeptidase activity, with a marked preference for Ala/Ser-Gly-Pro-Ser/Asn/Ala consensus sequences, on substrate such as alpha-2-antiplasmin SERPINF2 and SPRY2. Degrade also gelatin, heat-denatured type I collagen, but not native collagen type I and IV, vibronectin, tenascin, laminin, fibronectin, fibrin or casein. Also has dipeptidyl peptidase activity, exhibiting the ability to hydrolyze the prolyl bond two residues from the N-terminus of synthetic dipeptide substrates provided that the penultimate residue is proline, with a preference for Ala-Pro, Ile-Pro, Gly-Pro, Arg-Pro and Pro-Pro. Natural neuropeptide hormones for dipeptidyl peptidase are the neuropeptide Y (NPY), peptide YY (PYY), substance P (TAC1) and brain natriuretic peptide 32 (NPPB). The plasma membrane form, in association with either DPP4, PLAUR or integrins, is involved in the pericellular proteolysis of the extracellular matrix (ECM), and hence promotes cell adhesion, migration and invasion through the ECM. Plays a role in tissue remodeling during development and wound healing. Participates in the cell invasiveness towards the ECM in malignant melanoma cancers. Enhances tumor growth progression by increasing angiogenesis, collagen fiber degradation and apoptosis and by reducing antitumor response of the immune system. Promotes glioma cell invasion through the brain parenchyma by degrading the proteoglycan brevican. Acts as a tumor suppressor in melanocytic cells through regulation of cell proliferation and survival in a serine protease activity-independent manner. The protein is Prolyl endopeptidase FAP of Bos taurus (Bovine).